A 751-amino-acid chain; its full sequence is Photosystem I P700 chlorophyll a apoprotein A1 (751 aa).

A run of 8 helical transmembrane segments spans residues 73–96 (VFSA…FHGA), 159–182 (LYTT…FHYH), 198–222 (LNHH…HVSL), 294–312 (TVHH…GHQY), 349–372 (WHAQ…HHMY), 388–414 (LSLF…IFMV), 436–458 (AMIS…LYIH), and 533–551 (FMVH…LILL). Cysteine 575 and cysteine 584 together coordinate [4Fe-4S] cluster. 2 helical membrane-spanning segments follow: residues 591-612 (HVFL…HFSW) and 665-687 (LSAY…MFLF). A chlorophyll a'-binding site is contributed by histidine 676. Chlorophyll a contacts are provided by methionine 684 and tyrosine 692. Tryptophan 693 provides a ligand contact to phylloquinone. A helical membrane pass occupies residues 725-745 (AVGVAHYLLGGIATTWSFFLA).

It belongs to the PsaA/PsaB family. In terms of assembly, the PsaA/B heterodimer binds the P700 chlorophyll special pair and subsequent electron acceptors. PSI consists of a core antenna complex that captures photons, and an electron transfer chain that converts photonic excitation into a charge separation. The eukaryotic PSI reaction center is composed of at least 11 subunits. The cofactor is P700 is a chlorophyll a/chlorophyll a' dimer, A0 is one or more chlorophyll a, A1 is one or both phylloquinones and FX is a shared 4Fe-4S iron-sulfur center..

It localises to the plastid. It is found in the chloroplast thylakoid membrane. The enzyme catalyses reduced [plastocyanin] + hnu + oxidized [2Fe-2S]-[ferredoxin] = oxidized [plastocyanin] + reduced [2Fe-2S]-[ferredoxin]. Functionally, psaA and PsaB bind P700, the primary electron donor of photosystem I (PSI), as well as the electron acceptors A0, A1 and FX. PSI is a plastocyanin/cytochrome c6-ferredoxin oxidoreductase, converting photonic excitation into a charge separation, which transfers an electron from the donor P700 chlorophyll pair to the spectroscopically characterized acceptors A0, A1, FX, FA and FB in turn. Oxidized P700 is reduced on the lumenal side of the thylakoid membrane by plastocyanin or cytochrome c6. In Chlorella vulgaris (Green alga), this protein is Photosystem I P700 chlorophyll a apoprotein A1.